Here is a 317-residue protein sequence, read N- to C-terminus: Transaldolase (317 aa).

Residue lysine 126 is the Schiff-base intermediate with substrate of the active site.

It belongs to the transaldolase family. Type 1 subfamily. Homodimer.

Its subcellular location is the cytoplasm. It catalyses the reaction D-sedoheptulose 7-phosphate + D-glyceraldehyde 3-phosphate = D-erythrose 4-phosphate + beta-D-fructose 6-phosphate. Its pathway is carbohydrate degradation; pentose phosphate pathway; D-glyceraldehyde 3-phosphate and beta-D-fructose 6-phosphate from D-ribose 5-phosphate and D-xylulose 5-phosphate (non-oxidative stage): step 2/3. Functionally, transaldolase is important for the balance of metabolites in the pentose-phosphate pathway. In Burkholderia ambifaria (strain ATCC BAA-244 / DSM 16087 / CCUG 44356 / LMG 19182 / AMMD) (Burkholderia cepacia (strain AMMD)), this protein is Transaldolase.